The chain runs to 87 residues: MANTSQARKRARQAGVRRVRNAGQRSMMRTYVKKIVKAIVSGDKSQAAAAYKEAVPILDRLARKGLVHPNKAARHKSRLNAQIRAMS.

The segment at 1-22 (MANTSQARKRARQAGVRRVRNA) is disordered. Over residues 7-20 (ARKRARQAGVRRVR) the composition is skewed to basic residues.

It belongs to the bacterial ribosomal protein bS20 family.

Its function is as follows. Binds directly to 16S ribosomal RNA. The polypeptide is Small ribosomal subunit protein bS20 (Nitrosococcus oceani (strain ATCC 19707 / BCRC 17464 / JCM 30415 / NCIMB 11848 / C-107)).